Here is a 134-residue protein sequence, read N- to C-terminus: Cytochrome b5 (134 aa).

Alanine 2 carries the post-translational modification N-acetylalanine. N6-acetyllysine is present on residues lysine 7, lysine 10, and lysine 19. The 77-residue stretch at 9-85 (VKYYTLEEIQ…SKTYIIGELH (77 aa)) folds into the Cytochrome b5 heme-binding domain. Residues histidine 44 and histidine 68 each contribute to the heme site. Residues 109–131 (WWTNWVIPAISALAVALMYRLYM) traverse the membrane as a helical segment.

It belongs to the cytochrome b5 family.

It localises to the endoplasmic reticulum membrane. The protein localises to the microsome membrane. Functionally, cytochrome b5 is a membrane-bound hemoprotein functioning as an electron carrier for several membrane-bound oxygenases. It is also involved in several steps of the sterol biosynthesis pathway, particularly in the C-5 double bond introduction during the C-5 desaturation. The chain is Cytochrome b5 (Cyb5a) from Mus musculus (Mouse).